The chain runs to 55 residues: Accessory gland-specific peptide 70A (55 aa).

The signal sequence occupies residues M1 to S19. Hydroxyproline occurs at positions 28, 32, 34, and 38. Residues C43 and C55 are joined by a disulfide bond.

Main cells of the accessory glands of males (paragonial gland).

Its subcellular location is the secreted. Functionally, represses female sexual receptivity and stimulates oviposition. This Drosophila mauritiana (Fruit fly) protein is Accessory gland-specific peptide 70A (Acp70A).